A 402-amino-acid chain; its full sequence is Succinylornithine transaminase (402 aa).

K252 bears the N6-(pyridoxal phosphate)lysine mark.

The protein belongs to the class-III pyridoxal-phosphate-dependent aminotransferase family. AstC subfamily. It depends on pyridoxal 5'-phosphate as a cofactor.

It catalyses the reaction N(2)-succinyl-L-ornithine + 2-oxoglutarate = N-succinyl-L-glutamate 5-semialdehyde + L-glutamate. It functions in the pathway amino-acid degradation; L-arginine degradation via AST pathway; L-glutamate and succinate from L-arginine: step 3/5. Functionally, catalyzes the transamination of N(2)-succinylornithine and alpha-ketoglutarate into N(2)-succinylglutamate semialdehyde and glutamate. Can also act as an acetylornithine aminotransferase. The sequence is that of Succinylornithine transaminase from Photorhabdus laumondii subsp. laumondii (strain DSM 15139 / CIP 105565 / TT01) (Photorhabdus luminescens subsp. laumondii).